The chain runs to 156 residues: 6,7-dimethyl-8-ribityllumazine synthase (156 aa).

5-amino-6-(D-ribitylamino)uracil is bound by residues Phe25, 59 to 61 (AWE), and 83 to 85 (AVI). 88–89 (ST) contributes to the (2S)-2-hydroxy-3-oxobutyl phosphate binding site. His91 functions as the Proton donor in the catalytic mechanism. 5-amino-6-(D-ribitylamino)uracil is bound at residue Asn116. Arg130 provides a ligand contact to (2S)-2-hydroxy-3-oxobutyl phosphate.

It belongs to the DMRL synthase family. In terms of assembly, forms an icosahedral capsid composed of 60 subunits, arranged as a dodecamer of pentamers.

The catalysed reaction is (2S)-2-hydroxy-3-oxobutyl phosphate + 5-amino-6-(D-ribitylamino)uracil = 6,7-dimethyl-8-(1-D-ribityl)lumazine + phosphate + 2 H2O + H(+). It functions in the pathway cofactor biosynthesis; riboflavin biosynthesis; riboflavin from 2-hydroxy-3-oxobutyl phosphate and 5-amino-6-(D-ribitylamino)uracil: step 1/2. Functionally, catalyzes the formation of 6,7-dimethyl-8-ribityllumazine by condensation of 5-amino-6-(D-ribitylamino)uracil with 3,4-dihydroxy-2-butanone 4-phosphate. This is the penultimate step in the biosynthesis of riboflavin. This is 6,7-dimethyl-8-ribityllumazine synthase from Acinetobacter baylyi (strain ATCC 33305 / BD413 / ADP1).